Consider the following 244-residue polypeptide: 1-(5-phosphoribosyl)-5-[(5-phosphoribosylamino)methylideneamino] imidazole-4-carboxamide isomerase (244 aa).

D10 acts as the Proton acceptor in catalysis. Catalysis depends on D132, which acts as the Proton donor.

The protein belongs to the HisA/HisF family.

The protein resides in the cytoplasm. It carries out the reaction 1-(5-phospho-beta-D-ribosyl)-5-[(5-phospho-beta-D-ribosylamino)methylideneamino]imidazole-4-carboxamide = 5-[(5-phospho-1-deoxy-D-ribulos-1-ylimino)methylamino]-1-(5-phospho-beta-D-ribosyl)imidazole-4-carboxamide. It functions in the pathway amino-acid biosynthesis; L-histidine biosynthesis; L-histidine from 5-phospho-alpha-D-ribose 1-diphosphate: step 4/9. This is 1-(5-phosphoribosyl)-5-[(5-phosphoribosylamino)methylideneamino] imidazole-4-carboxamide isomerase from Xanthomonas axonopodis pv. citri (strain 306).